The chain runs to 597 residues: DDB1- and CUL4-associated factor 8 (597 aa).

The span at 1-24 (MSSKGSSTDGRTDLANGSLSSSPE) shows a compositional bias: polar residues. Positions 1–147 (MSSKGSSTDG…DWVSSETSAL (147 aa)) are disordered. Phosphoserine is present on residues Ser21 and Ser22. Positions 39–50 (IEVEASDLSLSL) match the Nuclear export signal motif. Basic and acidic residues predominate over residues 65–99 (RGTDTESSGEDKDSDSMEDTGHYSINDENRVHDRS). A Phosphoserine modification is found at Ser99. Residues 100–112 (EEEEEEEEEEEEE) are compositionally biased toward acidic residues. Residues 114–122 (PRRRVQRKR) carry the Nuclear localization signal motif. Basic and acidic residues predominate over residues 124-137 (NRDQDSSDDERALE). 2 positions are modified to phosphoserine: Ser129 and Ser130. 7 WD repeats span residues 191 to 230 (GHTGCVNTLHFNQRGTWLASGSDDLKVVVWDWVRRQPVLD), 234 to 275 (GHKS…CCKN), 281 to 321 (QHKG…PASK), 329 to 369 (EKKV…ENEN), 385 to 424 (ESKANITCLVYSHDGTELLASYNDEDIYLFNSSHSDGAQY), 432 to 472 (RNNA…IIQF), and 476 to 515 (DKGGVVNCLEPHPHLPVLATSGLDHDVKIWAPTAEASTEL). Residue Arg204 is modified to Omega-N-methylarginine; by PRMT1. Positions 558–597 (HRRWREPGVGATDADSDESPSSSDTSDEEEGPDRVQCMPS) are disordered.

It belongs to the WD repeat DCAF8 family. Interacts with DDB1, CUL4A and CUL4B. Interacts with KPNA1, KPNB1 and XPO1.

It localises to the nucleus. Its subcellular location is the cytoplasm. Its pathway is protein modification; protein ubiquitination. Functionally, may function as a substrate receptor for CUL4-DDB1 E3 ubiquitin-protein ligase complex. This Homo sapiens (Human) protein is DDB1- and CUL4-associated factor 8 (DCAF8).